A 384-amino-acid polypeptide reads, in one-letter code: MGSLCSRNKHYSQADDEENTQTAEIERRIEQETKADKHIQKLLLLGAGDSGKSTIFKQIKLLFQTGFDEAELKNYIPVIHANVYQTIKILHDGSKELAQNELEASKYLLSAENKEIGEKLSEIGGRLDYPRLTKDLVQDIEALWKDPAIQETLLRGNELQVPDCAHYFMENLERFSDIHYIPTKEDVLFARIRTTGVVEIQFSPVGENKKSGEVYRLFDVGGQRNERRKWIHLFEGVTAVIFCAAISEYDQTLFEDERKNRMMETKELFEWVLKQPCFEKTSFMLFLNKFDIFEQKVLKVPLNTCEWFKDYQSVSTGKQEIEHAYEFVKKKFEESYFQCTAPDRVDRVFKIYRTTALDQKLVKKTFKLVDETLRRRNLFEAGLL.

The interval 1-22 is disordered; sequence MGSLCSRNKHYSQADDEENTQT. Gly2 is lipidated: N-myristoyl glycine. The S-palmitoyl cysteine moiety is linked to residue Cys5. The G-alpha domain maps to 38–384; that stretch reads HIQKLLLLGA…RRNLFEAGLL (347 aa). The G1 motif stretch occupies residues 41–54; the sequence is KLLLLGAGDSGKST. Asp49, Ser50, Gly51, Lys52, Ser53, Thr54, Asp163, Leu188, Thr194, Gly222, Asn288, Lys289, Asp291, and Ala356 together coordinate GTP. Residue Ser53 coordinates Mg(2+). Residues 186-194 form a G2 motif region; it reads DVLFARIRT. Thr194 contacts Mg(2+). Residues 215-224 form a G3 motif region; it reads YRLFDVGGQR. Residues 284 to 291 are G4 motif; that stretch reads MLFLNKFD. Residues 354-359 form a G5 motif region; sequence TTALDQ.

Belongs to the G-alpha family. As to quaternary structure, g proteins are composed of 3 units; alpha, beta and gamma. The alpha chain contains the guanine nucleotide binding site. It depends on Mg(2+) as a cofactor.

Its function is as follows. Guanine nucleotide-binding proteins (G proteins) are involved as modulators or transducers in various transmembrane signaling systems. The protein is Guanine nucleotide-binding protein alpha-1 subunit (GPA1) of Solanum tuberosum (Potato).